A 146-amino-acid polypeptide reads, in one-letter code: MAPRADKKPAEKKPGAEKTPVAEKAPAEKKPRAGKKLPRDAGAAGDKKKKRAEMSVETYKIYIFRVLKHVHPDIGISSKAMGIMNSFINDIFEKLARESSRLAGYNKKPTISSREIQTAVRLVLPGELAKHAVSEGTKAVTKFTSS.

Over residues 1-16 (MAPRADKKPAEKKPGA) the composition is skewed to basic and acidic residues. The disordered stretch occupies residues 1-52 (MAPRADKKPAEKKPGAEKTPVAEKAPAEKKPRAGKKLPRDAGAAGDKKKKRA). 3 positions are modified to N6-acetyllysine: Lys-7, Lys-35, and Lys-36. Lys-142 participates in a covalent cross-link: Glycyl lysine isopeptide (Lys-Gly) (interchain with G-Cter in ubiquitin).

The protein belongs to the histone H2B family. The nucleosome is a histone octamer containing two molecules each of H2A, H2B, H3 and H4 assembled in one H3-H4 heterotetramer and two H2A-H2B heterodimers. The octamer wraps approximately 147 bp of DNA. Post-translationally, can be acetylated to form H2BK6ac, H2BK33ac and H2BK34ac. Monoubiquitinated to form H2BK143ub1; may give a specific tag for epigenetic transcriptional activation.

Its subcellular location is the nucleus. The protein resides in the chromosome. Functionally, core component of nucleosome. Nucleosomes wrap and compact DNA into chromatin, limiting DNA accessibility to the cellular machineries which require DNA as a template. Histones thereby play a central role in transcription regulation, DNA repair, DNA replication and chromosomal stability. DNA accessibility is regulated via a complex set of post-translational modifications of histones, also called histone code, and nucleosome remodeling. The sequence is that of Histone H2B (HIS2B) from Nicotiana tabacum (Common tobacco).